We begin with the raw amino-acid sequence, 84 residues long: MAHKKGAGSTKNGRDSKPKMLGVKRFAGEKVHSGTIIVRQRGTRIHPGENVGLGRDYTIFATCEGVVKFEPTTNDRRKVSVVAD.

Positions 1 to 25 (MAHKKGAGSTKNGRDSKPKMLGVKR) are disordered.

Belongs to the bacterial ribosomal protein bL27 family.

The chain is Large ribosomal subunit protein bL27 from Dehalococcoides mccartyi (strain ATCC BAA-2266 / KCTC 15142 / 195) (Dehalococcoides ethenogenes (strain 195)).